Consider the following 215-residue polypeptide: Cytochrome c biogenesis ATP-binding export protein CcmA (215 aa).

Residues 7–209 enclose the ABC transporter domain; sequence LKIDRLACQR…ALTVLNLAQY (203 aa). 39–46 is a binding site for ATP; sequence GHNGIGKT.

This sequence belongs to the ABC transporter superfamily. CcmA exporter (TC 3.A.1.107) family. In terms of assembly, the complex is composed of two ATP-binding proteins (CcmA) and two transmembrane proteins (CcmB).

The protein localises to the cell inner membrane. The catalysed reaction is heme b(in) + ATP + H2O = heme b(out) + ADP + phosphate + H(+). Part of the ABC transporter complex CcmAB involved in the biogenesis of c-type cytochromes; once thought to export heme, this seems not to be the case, but its exact role is uncertain. Responsible for energy coupling to the transport system. This Mannheimia succiniciproducens (strain KCTC 0769BP / MBEL55E) protein is Cytochrome c biogenesis ATP-binding export protein CcmA.